The primary structure comprises 263 residues: Purine nucleoside phosphorylase SACOL1200 (263 aa).

3 residues coordinate Zn(2+): histidine 79, cysteine 124, and histidine 141.

It belongs to the purine nucleoside phosphorylase YfiH/LACC1 family. Homodimer. Cu(2+) is required as a cofactor. Zn(2+) serves as cofactor.

The catalysed reaction is adenosine + phosphate = alpha-D-ribose 1-phosphate + adenine. It carries out the reaction S-methyl-5'-thioadenosine + phosphate = 5-(methylsulfanyl)-alpha-D-ribose 1-phosphate + adenine. The enzyme catalyses inosine + phosphate = alpha-D-ribose 1-phosphate + hypoxanthine. It catalyses the reaction adenosine + H2O + H(+) = inosine + NH4(+). Purine nucleoside enzyme that catalyzes the phosphorolysis of adenosine and inosine nucleosides, yielding D-ribose 1-phosphate and the respective free bases, adenine and hypoxanthine. Also catalyzes the phosphorolysis of S-methyl-5'-thioadenosine into adenine and S-methyl-5-thio-alpha-D-ribose 1-phosphate. Also has adenosine deaminase activity. In Staphylococcus aureus (strain COL), this protein is Purine nucleoside phosphorylase SACOL1200.